Reading from the N-terminus, the 576-residue chain is Urease subunit alpha (576 aa).

In terms of domain architecture, Urease spans glycine 132–phenylalanine 576. Positions 137, 139, and 220 each coordinate Ni(2+). At lysine 220 the chain carries N6-carboxylysine. Histidine 222 serves as a coordination point for substrate. Ni(2+) contacts are provided by histidine 249 and histidine 275. Catalysis depends on histidine 323, which acts as the Proton donor. A Ni(2+)-binding site is contributed by aspartate 363.

The protein belongs to the metallo-dependent hydrolases superfamily. Urease alpha subunit family. As to quaternary structure, heterotrimer of UreA (gamma), UreB (beta) and UreC (alpha) subunits. Three heterotrimers associate to form the active enzyme. Requires Ni cation as cofactor. Post-translationally, carboxylation allows a single lysine to coordinate two nickel ions.

Its subcellular location is the cytoplasm. The enzyme catalyses urea + 2 H2O + H(+) = hydrogencarbonate + 2 NH4(+). It functions in the pathway nitrogen metabolism; urea degradation; CO(2) and NH(3) from urea (urease route): step 1/1. The protein is Urease subunit alpha of Paenarthrobacter aurescens (strain TC1).